We begin with the raw amino-acid sequence, 761 residues long: Neurotrypsin (761 aa).

The first 21 residues, 1 to 21, serve as a signal peptide directing secretion; sequence MALARCVLAVILGVLSEVARA. The interval 26-88 is disordered; it reads HSPLHRPHPS…PTISRRCGAG (63 aa). Over residues 54 to 63 the composition is skewed to pro residues; sequence TPRFPLPPRA. Residues 85-157 form the Kringle domain; sequence CGAGEPWGNA…GKVDWGYCDC (73 aa). 17 disulfides stabilise this stretch: Cys-85-Cys-157, Cys-101-Cys-141, Cys-130-Cys-155, Cys-191-Cys-255, Cys-204-Cys-265, Cys-235-Cys-245, Cys-298-Cys-361, Cys-311-Cys-371, Cys-341-Cys-351, Cys-411-Cys-475, Cys-424-Cys-485, Cys-455-Cys-465, Cys-505-Cys-636, Cys-547-Cys-563, Cys-651-Cys-717, Cys-680-Cys-694, and Cys-707-Cys-736. Asn-93 is a glycosylation site (N-linked (GlcNAc...) asparagine). SRCR domains follow at residues 166–267, 273–373, and 386–487; these read IRLV…SCAP, IRLS…TCYP, and IRLM…ICDY. The segment at 505 to 516 is zymogen activation region; it reads CGLRLLHRRQKR. The region spanning 517–760 is the Peptidase S1 domain; sequence IIGGNNSLRG…FVPWIKSVTS (244 aa). N-linked (GlcNAc...) asparagine glycosylation is present at Asn-521. Catalysis depends on His-562, which acts as the Charge relay system. Asn-569 carries N-linked (GlcNAc...) asparagine glycosylation. The active-site Charge relay system is Asp-612. The active-site Charge relay system is the Ser-711.

It belongs to the peptidase S1 family.

The protein resides in the secreted. Its function is as follows. Plays a role in neuronal plasticity and the proteolytic action may subserve structural reorganizations associated with learning and memory operations. The chain is Neurotrypsin (Prss12) from Rattus norvegicus (Rat).